A 195-amino-acid chain; its full sequence is Peptidyl-tRNA hydrolase (195 aa).

Tyr-17 is a binding site for tRNA. His-22 serves as the catalytic Proton acceptor. TRNA contacts are provided by Tyr-68, Asn-70, and Asn-116.

Belongs to the PTH family. In terms of assembly, monomer.

It is found in the cytoplasm. The enzyme catalyses an N-acyl-L-alpha-aminoacyl-tRNA + H2O = an N-acyl-L-amino acid + a tRNA + H(+). Hydrolyzes ribosome-free peptidyl-tRNAs (with 1 or more amino acids incorporated), which drop off the ribosome during protein synthesis, or as a result of ribosome stalling. In terms of biological role, catalyzes the release of premature peptidyl moieties from peptidyl-tRNA molecules trapped in stalled 50S ribosomal subunits, and thus maintains levels of free tRNAs and 50S ribosomes. In Shewanella baltica (strain OS155 / ATCC BAA-1091), this protein is Peptidyl-tRNA hydrolase.